Reading from the N-terminus, the 602-residue chain is Leucine-rich repeat-containing protein 40 (602 aa).

A Phosphoserine modification is found at S71. LRR repeat units lie at residues 83-104 (DLTK…LRLL), 106-127 (ALTV…IREL), 129-150 (NLQK…ITNL), 152-173 (NLKC…FEQL), 175-196 (NLED…FSSL), 198-219 (SLVR…INRM), 221-242 (RLKH…LAGM), 244-265 (SLEL…PSCS), 266-286 (LLKE…EHLK), 290-311 (SILV…IILL), 313-335 (SLER…GNLH), 336-356 (LKFL…IISK), 400-421 (TLKI…VFDA), 426-447 (IVTS…MVEL), 450-472 (MVSD…CVLQ), 473-494 (KLTF…MESL), 496-517 (RLQT…LYRI), 519-540 (TLET…KMKM), 543-564 (NLTT…LGNC), and 566-586 (NLRT…AILM).

This chain is Leucine-rich repeat-containing protein 40 (LRRC40), found in Homo sapiens (Human).